Consider the following 312-residue polypeptide: tRNA (adenine(58)-N(1))-methyltransferase catalytic subunit trmt61a (312 aa).

Residues Leu-85, 112–114 (SGS), Glu-133, Arg-138, 161–162 (DA), and Asp-183 each bind S-adenosyl-L-methionine.

This sequence belongs to the class I-like SAM-binding methyltransferase superfamily. TRM61 family. As to quaternary structure, heterotetramer; composed of two copies of trmt6 and two copies of trmt61a.

It localises to the nucleus. It catalyses the reaction adenosine(58) in tRNA + S-adenosyl-L-methionine = N(1)-methyladenosine(58) in tRNA + S-adenosyl-L-homocysteine + H(+). Its activity is regulated as follows. Inhibited by calcium and magnesium ions and spermidine. Enhanced by KCl, NaCl and NH(4)Cl in concentrations from 0.1-0.25 M. Concentrations of more than 0.3 M are inhibitory. Functionally, catalytic subunit of tRNA (adenine-N(1)-)-methyltransferase, which catalyzes the formation of N(1)-methyladenine at position 58 (m1A58) in initiator methionyl-tRNA. This chain is tRNA (adenine(58)-N(1))-methyltransferase catalytic subunit trmt61a (trmt61a), found in Dictyostelium discoideum (Social amoeba).